The chain runs to 141 residues: Hemoglobin subunit alpha (141 aa).

Residues 1–141 form the Globin domain; sequence VLSPADKNNV…VSTVLTSKYR (141 aa). The residue at position 3 (Ser-3) is a Phosphoserine. Residues Lys-7 and Lys-11 each carry the N6-succinyllysine modification. Lys-16 carries the post-translational modification N6-acetyllysine; alternate. The residue at position 16 (Lys-16) is an N6-succinyllysine; alternate. The residue at position 24 (Tyr-24) is a Phosphotyrosine. The residue at position 35 (Ser-35) is a Phosphoserine. Residue Lys-40 is modified to N6-succinyllysine. Phosphoserine is present on Ser-49. Residue His-58 participates in O2 binding. Heme b is bound at residue His-87. Ser-102 is modified (phosphoserine). Thr-108 carries the phosphothreonine modification. 2 positions are modified to phosphoserine: Ser-124 and Ser-131. A phosphothreonine mark is found at Thr-134 and Thr-137. Ser-138 bears the Phosphoserine mark.

Belongs to the globin family. In terms of assembly, heterotetramer of two alpha chains and two beta chains. In terms of tissue distribution, red blood cells.

Its function is as follows. Involved in oxygen transport from the lung to the various peripheral tissues. Hemopressin acts as an antagonist peptide of the cannabinoid receptor CNR1. Hemopressin-binding efficiently blocks cannabinoid receptor CNR1 and subsequent signaling. The polypeptide is Hemoglobin subunit alpha (HBA) (Urocitellus townsendii (Townsend's ground squirrel)).